Here is a 393-residue protein sequence, read N- to C-terminus: MQQTKKLTHSDITIAVMSGPFLQRGEPALVSKWYRTKMALACGVDLVVELPYAFSTQKAETFANGAISILNALHVSEICFGSEDGQIENFYNTISVQKNEEETFNRLVKQFMNAGNSYAKATSEAFLHILSSEKNIDMSQPNNILGFQYIKAILMQNSSMQAQTIKRFASHYHDETFNDQHIASATSIRKQLFSENSSFTEIEPFIPKATASLLASYKQNYGTLHNWEQYFSFFKYKLMTMSPEDLRHIYEIEEGLEHRILSKIQTSSSFHSFMEALKTKRYTWTRLQRACTHILTNTTKEEIHCANIEQHAPYIRLLGMSQKGQTYLSKNKKKIELPILTHTKTFDHPTLHIDRKANSVYFSIIQEPLRTQLLKQDATHHPIRYDETTAKFL.

G81, N142, and R167 together coordinate ATP.

It belongs to the TmcAL family.

Its subcellular location is the cytoplasm. It catalyses the reaction cytidine(34) in elongator tRNA(Met) + acetate + ATP = N(4)-acetylcytidine(34) in elongator tRNA(Met) + AMP + diphosphate. In terms of biological role, catalyzes the formation of N(4)-acetylcytidine (ac(4)C) at the wobble position of elongator tRNA(Met), using acetate and ATP as substrates. First activates an acetate ion to form acetyladenylate (Ac-AMP) and then transfers the acetyl group to tRNA to form ac(4)C34. This Bacillus cereus (strain ATCC 10987 / NRS 248) protein is tRNA(Met) cytidine acetate ligase.